We begin with the raw amino-acid sequence, 376 residues long: Probable inactive protein kinase At3g63330 (376 aa).

The Protein kinase domain occupies 1-370 (MVERGPTVYL…VDEALQHPYF (370 aa)).

It belongs to the protein kinase superfamily. Ser/Thr protein kinase family.

The protein is Probable inactive protein kinase At3g63330 of Arabidopsis thaliana (Mouse-ear cress).